Consider the following 310-residue polypeptide: tRNA-cytidine(32) 2-sulfurtransferase (310 aa).

Positions 48–53 (SGGKDS) match the PP-loop motif motif. Positions 123, 126, and 214 each coordinate [4Fe-4S] cluster.

The protein belongs to the TtcA family. As to quaternary structure, homodimer. Mg(2+) is required as a cofactor. Requires [4Fe-4S] cluster as cofactor.

The protein resides in the cytoplasm. It carries out the reaction cytidine(32) in tRNA + S-sulfanyl-L-cysteinyl-[cysteine desulfurase] + AH2 + ATP = 2-thiocytidine(32) in tRNA + L-cysteinyl-[cysteine desulfurase] + A + AMP + diphosphate + H(+). The protein operates within tRNA modification. Functionally, catalyzes the ATP-dependent 2-thiolation of cytidine in position 32 of tRNA, to form 2-thiocytidine (s(2)C32). The sulfur atoms are provided by the cysteine/cysteine desulfurase (IscS) system. This is tRNA-cytidine(32) 2-sulfurtransferase from Vibrio vulnificus (strain YJ016).